The following is a 320-amino-acid chain: Cytochrome f (320 aa).

Positions 1–35 (MQTRNTFSWIKEEITRSISVSLMIYIITGASISNA) are cleaved as a signal peptide. The heme site is built by tyrosine 36, cysteine 56, cysteine 59, and histidine 60. Residues 286–306 (VQGLLFFLASIVFAQIFLVLK) traverse the membrane as a helical segment.

It belongs to the cytochrome f family. As to quaternary structure, the 4 large subunits of the cytochrome b6-f complex are cytochrome b6, subunit IV (17 kDa polypeptide, petD), cytochrome f and the Rieske protein, while the 4 small subunits are PetG, PetL, PetM and PetN. The complex functions as a dimer. Heme serves as cofactor.

It localises to the plastid. The protein resides in the chloroplast thylakoid membrane. Its function is as follows. Component of the cytochrome b6-f complex, which mediates electron transfer between photosystem II (PSII) and photosystem I (PSI), cyclic electron flow around PSI, and state transitions. The chain is Cytochrome f from Gossypium barbadense (Sea Island cotton).